The chain runs to 85 residues: Colicin E3 immunity protein (85 aa).

It belongs to the cloacin immunity protein family. As to quaternary structure, native colicin E3 is a 1:1 complex of A chain and protein B (Im3). Binds between the translocation and cytotoxic RNase domains of intact ColE3, blocking access to the 16S rRNA substrate. Forms a very tight 1:1 complex with the cytotoxic fragment (residues 456-551) of ColE3 (ceaC).

Its function is as follows. The cognate immunity protein for colicin E3 (ColE3), protects cells which harbor the plasmid ColE3 against the toxic action of ColE3. This protein inhibits the 16S RNA hydrolyzing activity of ColE3 by binding with very high affinity to the C-terminal catalytic domain of ColE3. The polypeptide is Colicin E3 immunity protein (Escherichia coli).